The following is a 345-amino-acid chain: Phosphoribosylformylglycinamidine cyclo-ligase (345 aa).

Belongs to the AIR synthase family.

It localises to the cytoplasm. The enzyme catalyses 2-formamido-N(1)-(5-O-phospho-beta-D-ribosyl)acetamidine + ATP = 5-amino-1-(5-phospho-beta-D-ribosyl)imidazole + ADP + phosphate + H(+). It functions in the pathway purine metabolism; IMP biosynthesis via de novo pathway; 5-amino-1-(5-phospho-D-ribosyl)imidazole from N(2)-formyl-N(1)-(5-phospho-D-ribosyl)glycinamide: step 2/2. The protein is Phosphoribosylformylglycinamidine cyclo-ligase of Shewanella putrefaciens (strain CN-32 / ATCC BAA-453).